Here is a 1038-residue protein sequence, read N- to C-terminus: Inner tegument protein (1038 aa).

An interaction with large tegument protein region spans residues 545 to 1038; it reads WGITPPVDVG…VPGNTSGSDP (494 aa).

This sequence belongs to the herpesviridae inner tegument protein family. In terms of assembly, interacts (via C-terminus) with the large tegument protein/LTP (via N-terminus).

The protein localises to the virion tegument. It localises to the host cytoplasm. It is found in the host nucleus. Its subcellular location is the host Golgi apparatus. The protein resides in the host trans-Golgi network. Its function is as follows. Plays an essential role in cytoplasmic secondary envelopment during viral egress. Interacts with the capsid via the large tegument protein/LTP and participates in its transport to the host trans-Golgi network (TGN) where secondary envelopment occurs. Modulates tegumentation and capsid accumulation at the viral assembly complex. The sequence is that of Inner tegument protein (21) from Homo sapiens (Human).